We begin with the raw amino-acid sequence, 106 residues long: Phosphoribosyl-ATP pyrophosphatase (106 aa).

The protein belongs to the PRA-PH family.

It localises to the cytoplasm. It carries out the reaction 1-(5-phospho-beta-D-ribosyl)-ATP + H2O = 1-(5-phospho-beta-D-ribosyl)-5'-AMP + diphosphate + H(+). It participates in amino-acid biosynthesis; L-histidine biosynthesis; L-histidine from 5-phospho-alpha-D-ribose 1-diphosphate: step 2/9. The sequence is that of Phosphoribosyl-ATP pyrophosphatase from Limosilactobacillus fermentum (strain NBRC 3956 / LMG 18251) (Lactobacillus fermentum).